A 269-amino-acid chain; its full sequence is Hydroxyethylthiazole kinase (269 aa).

M45 lines the substrate pocket. R121 and T167 together coordinate ATP. Position 194 (G194) interacts with substrate.

The protein belongs to the Thz kinase family. It depends on Mg(2+) as a cofactor.

The catalysed reaction is 5-(2-hydroxyethyl)-4-methylthiazole + ATP = 4-methyl-5-(2-phosphooxyethyl)-thiazole + ADP + H(+). It participates in cofactor biosynthesis; thiamine diphosphate biosynthesis; 4-methyl-5-(2-phosphoethyl)-thiazole from 5-(2-hydroxyethyl)-4-methylthiazole: step 1/1. Catalyzes the phosphorylation of the hydroxyl group of 4-methyl-5-beta-hydroxyethylthiazole (THZ). This chain is Hydroxyethylthiazole kinase, found in Bacillus cereus (strain ATCC 14579 / DSM 31 / CCUG 7414 / JCM 2152 / NBRC 15305 / NCIMB 9373 / NCTC 2599 / NRRL B-3711).